We begin with the raw amino-acid sequence, 124 residues long: uncharacterized protein (124 aa).

Residues 1–18 form the signal peptide; the sequence is MHIIKTLISVGVAFSLSA. Cysteine 19 carries the N-palmitoyl cysteine lipid modification. Cysteine 19 carries the S-diacylglycerol cysteine lipid modification.

The protein resides in the cell membrane. This is an uncharacterized protein from Pasteurella multocida (strain Pm70).